The primary structure comprises 321 residues: S-methyl-5'-thioadenosine phosphorylase (321 aa).

Residues threonine 30, 73 to 74, and 106 to 107 contribute to the phosphate site; these read RH and SA. A substrate-binding site is contributed by methionine 215. Serine 216 provides a ligand contact to phosphate. A substrate-binding site is contributed by 239 to 241; sequence DYD.

The protein belongs to the PNP/MTAP phosphorylase family. MTAP subfamily. Homotrimer.

The protein resides in the cytoplasm. It localises to the nucleus. The catalysed reaction is S-methyl-5'-thioadenosine + phosphate = 5-(methylsulfanyl)-alpha-D-ribose 1-phosphate + adenine. The protein operates within amino-acid biosynthesis; L-methionine biosynthesis via salvage pathway; S-methyl-5-thio-alpha-D-ribose 1-phosphate from S-methyl-5'-thioadenosine (phosphorylase route): step 1/1. Its function is as follows. Catalyzes the reversible phosphorylation of S-methyl-5'-thioadenosine (MTA) to adenine and 5-methylthioribose-1-phosphate. Involved in the breakdown of MTA, a major by-product of polyamine biosynthesis. Responsible for the first step in the methionine salvage pathway after MTA has been generated from S-adenosylmethionine. Has broad substrate specificity with 6-aminopurine nucleosides as preferred substrates. In Yarrowia lipolytica (strain CLIB 122 / E 150) (Yeast), this protein is S-methyl-5'-thioadenosine phosphorylase.